The following is an 852-amino-acid chain: DNA mismatch repair protein MutS (852 aa).

615–622 contacts ATP; it reads GPNMAGKS.

It belongs to the DNA mismatch repair MutS family.

Functionally, this protein is involved in the repair of mismatches in DNA. It is possible that it carries out the mismatch recognition step. This protein has a weak ATPase activity. In Thermodesulfovibrio yellowstonii (strain ATCC 51303 / DSM 11347 / YP87), this protein is DNA mismatch repair protein MutS.